Here is a 202-residue protein sequence, read N- to C-terminus: Endothelin-1 (202 aa).

The N-terminal stretch at 1–25 (MDYFPMIFALLFVAFQGAPEAAVLG) is a signal peptide. Positions 26–50 (TELSTGAESGGERPVPTTPWRPRRS) are excised as a propeptide. The tract at residues 29–48 (STGAESGGERPVPTTPWRPR) is disordered. 2 cysteine pairs are disulfide-bonded: C53–C67 and C55–C63. The propeptide occupies 74–202 (VNTPEHVVPY…DKKVIYSRAH (129 aa)). Residues 110 to 124 (CQCASQTDKKCQNFC) form an endothelin-like region.

It belongs to the endothelin/sarafotoxin family.

The protein localises to the secreted. In terms of biological role, endothelins are endothelium-derived vasoconstrictor peptides. Probable ligand for G-protein coupled receptors EDNRA and EDNRB which activates PTK2B, BCAR1, BCAR3 and, GTPases RAP1 and RHOA cascade in glomerular mesangial cells. Also binds the DEAR/FBXW7-AS1 receptor. Promotes mesenteric arterial wall remodeling via activation of ROCK signaling and subsequent colocalization of NFATC3 with F-actin filaments. NFATC3 then translocates to the nucleus where it subsequently promotes the transcription of the smooth muscle hypertrophy and differentiation marker ACTA2. This chain is Endothelin-1 (EDN1), found in Ovis aries (Sheep).